A 325-amino-acid polypeptide reads, in one-letter code: Anthranilate phosphoribosyltransferase (325 aa).

5-phospho-alpha-D-ribose 1-diphosphate is bound by residues Gly73, 76-77 (GD), Thr81, 83-86 (NIST), 100-108 (KHGNVSITS), and Ser112. Residue Gly73 participates in anthranilate binding. Ser85 lines the Mg(2+) pocket. Asn103 is an anthranilate binding site. Arg158 contributes to the anthranilate binding site. Residues Asp216 and Glu217 each coordinate Mg(2+).

Belongs to the anthranilate phosphoribosyltransferase family. As to quaternary structure, homodimer. Mg(2+) is required as a cofactor.

It catalyses the reaction N-(5-phospho-beta-D-ribosyl)anthranilate + diphosphate = 5-phospho-alpha-D-ribose 1-diphosphate + anthranilate. The protein operates within amino-acid biosynthesis; L-tryptophan biosynthesis; L-tryptophan from chorismate: step 2/5. Functionally, catalyzes the transfer of the phosphoribosyl group of 5-phosphorylribose-1-pyrophosphate (PRPP) to anthranilate to yield N-(5'-phosphoribosyl)-anthranilate (PRA). This is Anthranilate phosphoribosyltransferase from Methanococcus aeolicus (strain ATCC BAA-1280 / DSM 17508 / OCM 812 / Nankai-3).